We begin with the raw amino-acid sequence, 524 residues long: Caffeate CoA-transferase (524 aa).

Glu-323 acts as the 5-glutamyl coenzyme A thioester intermediate in catalysis.

This sequence belongs to the 3-oxoacid CoA-transferase family. As to quaternary structure, homodimer.

It catalyses the reaction hydrocaffeoyl-CoA + (E)-caffeate = 3-(3,4-dihydroxyphenyl)propanoate + (E)-caffeoyl-CoA. Functionally, involved in caffeate respiration, which consists in the reduction of the C-C double bond of caffeate. CarA catalyzes an energy-saving CoA loop for caffeate activation in the steady state of caffeate respiration. It catalyzes the formation of caffeyl-CoA from caffeate with hydrocaffeyl-CoA as the CoA donor via a ping-pong mechanism. In addition to caffeate, the enzyme can utilize 4-coumarate or ferulate as CoA acceptor. Neither acetyl-CoA nor butyryl-CoA served as the CoA donor. This is Caffeate CoA-transferase from Acetobacterium woodii.